A 447-amino-acid chain; its full sequence is BAG family molecular chaperone regulator 5 (447 aa).

5 consecutive BAG domains span residues 9–86, 95–167, 182–260, 275–350, and 365–442; these read SISR…EQNA, QNIF…EDCM, SVAK…DLEE, SILK…DLKE, and SHKA…DLKS.

As to quaternary structure, binds to the ATPase domain of HSP/HSP70 chaperones. Binds PRKN. Interacts with HSPA8 and JPH2. Expressed in the heart.

Functionally, co-chaperone for HSP/HSP70 proteins. It functions as a nucleotide-exchange factor promoting the release of ADP from HSP70, thereby activating HSP70-mediated protein refolding. Has an essential role in maintaining proteostasis at junctional membrane complexes (JMC), where it may function as a scaffold between the HSPA8 chaperone and JMC proteins enabling correct, HSPA8-dependent JMC protein folding. Inhibits both auto-ubiquitination of PRKN and ubiquitination of target proteins by PRKN. The sequence is that of BAG family molecular chaperone regulator 5 (BAG5) from Homo sapiens (Human).